Consider the following 95-residue polypeptide: Large ribosomal subunit protein uL23 (95 aa).

The protein belongs to the universal ribosomal protein uL23 family. Part of the 50S ribosomal subunit. Contacts protein L29, and trigger factor when it is bound to the ribosome.

In terms of biological role, one of the early assembly proteins it binds 23S rRNA. One of the proteins that surrounds the polypeptide exit tunnel on the outside of the ribosome. Forms the main docking site for trigger factor binding to the ribosome. In Syntrophotalea carbinolica (strain DSM 2380 / NBRC 103641 / GraBd1) (Pelobacter carbinolicus), this protein is Large ribosomal subunit protein uL23.